The chain runs to 602 residues: MQSERQKYIRNFSIVAHIDHGKSTLADRLIEATGTLTEREMDTQVLDNMDLEKERGITIKSQAVRLIYKRNTGEEYTLNLIDTPGHVDFNYEVSRSLAACEGAILVVDATQGIQAQTLANCYLALDNDLEIVPVINKIDLPSARPEEVKQEIEDVIGIEAEDAPLVSAKTGLNIKDALEAIVNKVPAPEGDEKAPLKALIFDSYYDSYKGVVCHIRVKEGTIKEGTEIKLMNTGKVYEVVEVGVFVPNYMPVDELKAGDVGYVTASIKNVRDARVGDTITEAKRSANEALSGYRPAVPMVFSGIYPVDGAKYEELKEALEKLQVNDAALSFEPETSIALGFGFRCGFLGLLHMDIIQERLEREFNLDIITTAPSVIYKITKTDGTLIELTNPTNMPSPSEIKLMEEPIVKSSIITPSDYVGAVMDLAQNRRGIFKDMQYLDTTRVSLNYEIPLNEIIYDFFDALKSRTRGYASFDYELIGYKDADLVKLDILLNADVVDALSMIVPRERAYAKGRNMAQKLKEIIPRQMFEIPIQAAVGAKIIARETIKAMRKDVLAKCYGGDISRKRKLLEKQKEGKKRMRQVGSVEVPQEAFMAVLKTEE.

The region spanning 7 to 189 is the tr-type G domain; that stretch reads KYIRNFSIVA…AIVNKVPAPE (183 aa). Residues 19–24 and 136–139 each bind GTP; these read DHGKST and NKID.

This sequence belongs to the TRAFAC class translation factor GTPase superfamily. Classic translation factor GTPase family. LepA subfamily.

The protein resides in the cell membrane. The catalysed reaction is GTP + H2O = GDP + phosphate + H(+). In terms of biological role, required for accurate and efficient protein synthesis under certain stress conditions. May act as a fidelity factor of the translation reaction, by catalyzing a one-codon backward translocation of tRNAs on improperly translocated ribosomes. Back-translocation proceeds from a post-translocation (POST) complex to a pre-translocation (PRE) complex, thus giving elongation factor G a second chance to translocate the tRNAs correctly. Binds to ribosomes in a GTP-dependent manner. This chain is Elongation factor 4, found in Clostridium botulinum (strain Okra / Type B1).